The sequence spans 250 residues: DNA repair protein RecO (250 aa).

This sequence belongs to the RecO family.

Involved in DNA repair and RecF pathway recombination. The chain is DNA repair protein RecO from Staphylococcus aureus (strain Mu3 / ATCC 700698).